A 769-amino-acid polypeptide reads, in one-letter code: Sensor protein DivL (769 aa).

Residues 6–26 (LILAAAAGAVCLAISVALWSH) traverse the membrane as a helical segment. Residues 547 to 758 (NVSYELRTPL…TFTCHLPETQ (212 aa)) form the Histidine kinase domain. Tyr-550 bears the Phosphotyrosine; by autocatalysis mark.

Post-translationally, autophosphorylated.

The protein resides in the cell membrane. It carries out the reaction ATP + protein L-histidine = ADP + protein N-phospho-L-histidine.. Functionally, required for cell division and growth. It catalyzes the phosphorylation of CtrA and activates transcription in vitro of the cell cycle-regulated fliF promoter. This Caulobacter vibrioides (strain ATCC 19089 / CIP 103742 / CB 15) (Caulobacter crescentus) protein is Sensor protein DivL (divL).